The primary structure comprises 944 residues: Translation initiation factor IF-2 (944 aa).

Positions 61-281 (IQANQPAKNP…TAKNNKSHKI (221 aa)) are disordered. Residues 132–150 (TFENQTPPTENTPKVVSHS) are compositionally biased toward polar residues. A compositionally biased stretch (basic and acidic residues) spans 151-169 (QIEKAKQKLQEIQKSREAL). Positions 175 to 185 (SNANNASNTNN) are enriched in low complexity. The segment covering 186 to 203 (AKKEISEVKKQEQEIKRH) has biased composition (basic and acidic residues). Positions 204 to 215 (ENIKRRTGFRVI) are enriched in basic residues. Residues 244 to 259 (EDIKKEWQEKDKQEAK) are compositionally biased toward basic and acidic residues. Residues 443–612 (ERPPVVTIMG…LIQADIMELK (170 aa)) enclose the tr-type G domain. Residues 452–459 (GHVDHGKT) are G1. 452–459 (GHVDHGKT) is a GTP binding site. Positions 477 to 481 (GITQH) are G2. The G3 stretch occupies residues 498-501 (DTPG). Residues 498–502 (DTPGH) and 552–555 (NKMD) contribute to the GTP site. Residues 552–555 (NKMD) are G4. Residues 588–590 (SAK) are G5.

Belongs to the TRAFAC class translation factor GTPase superfamily. Classic translation factor GTPase family. IF-2 subfamily.

Its subcellular location is the cytoplasm. One of the essential components for the initiation of protein synthesis. Protects formylmethionyl-tRNA from spontaneous hydrolysis and promotes its binding to the 30S ribosomal subunits. Also involved in the hydrolysis of GTP during the formation of the 70S ribosomal complex. This Helicobacter pylori (strain HPAG1) protein is Translation initiation factor IF-2.